Reading from the N-terminus, the 260-residue chain is Proteasome subunit alpha type-1 (260 aa).

Residues 231–260 are disordered; the sequence is FLEGLEERPQRKPALPADEPAEKAEEPMEH. Over residues 250–260 the composition is skewed to basic and acidic residues; sequence PAEKAEEPMEH.

It belongs to the peptidase T1A family. As to quaternary structure, the 26S proteasome consists of a 20S proteasome core and two 19S regulatory subunits. The 20S proteasome core is a barrel-shaped complex made of 28 subunits that are arranged in four stacked rings. The two outer rings are each formed by seven alpha subunits, and the two inner rings are formed by seven beta subunits. The proteolytic activity is exerted by three beta-subunits PSMB5, PSMB6 and PSMB7.

The protein resides in the cytoplasm. Its subcellular location is the nucleus. Component of the 20S core proteasome complex involved in the proteolytic degradation of most intracellular proteins. This complex plays numerous essential roles within the cell by associating with different regulatory particles. Associated with two 19S regulatory particles, forms the 26S proteasome and thus participates in the ATP-dependent degradation of ubiquitinated proteins. The 26S proteasome plays a key role in the maintenance of protein homeostasis by removing misfolded or damaged proteins that could impair cellular functions, and by removing proteins whose functions are no longer required. Associated with the PA200 or PA28, the 20S proteasome mediates ubiquitin-independent protein degradation. This type of proteolysis is required in several pathways including spermatogenesis (20S-PA200 complex) or generation of a subset of MHC class I-presented antigenic peptides (20S-PA28 complex). In Gallus gallus (Chicken), this protein is Proteasome subunit alpha type-1 (PSMA1).